The sequence spans 411 residues: Probable tRNA pseudouridine synthase D (411 aa).

Asp79 (nucleophile) is an active-site residue. The TRUD domain maps to 150–369; it reads GFPNYFGQQR…STGDRRIVSA (220 aa).

This sequence belongs to the pseudouridine synthase TruD family.

The catalysed reaction is uridine(13) in tRNA = pseudouridine(13) in tRNA. Functionally, could be responsible for synthesis of pseudouridine from uracil-13 in transfer RNAs. The polypeptide is Probable tRNA pseudouridine synthase D (Thermoplasma acidophilum (strain ATCC 25905 / DSM 1728 / JCM 9062 / NBRC 15155 / AMRC-C165)).